The chain runs to 369 residues: DNA replication and repair protein RecF (369 aa).

30–37 (GDNGSGKT) is a binding site for ATP.

The protein belongs to the RecF family.

It is found in the cytoplasm. Its function is as follows. The RecF protein is involved in DNA metabolism; it is required for DNA replication and normal SOS inducibility. RecF binds preferentially to single-stranded, linear DNA. It also seems to bind ATP. This is DNA replication and repair protein RecF from Pseudomonas paraeruginosa (strain DSM 24068 / PA7) (Pseudomonas aeruginosa (strain PA7)).